The sequence spans 509 residues: Lysine--tRNA ligase (509 aa).

2 residues coordinate Mg(2+): Glu418 and Glu425.

Belongs to the class-II aminoacyl-tRNA synthetase family. In terms of assembly, homodimer. Mg(2+) is required as a cofactor.

The protein resides in the cytoplasm. The enzyme catalyses tRNA(Lys) + L-lysine + ATP = L-lysyl-tRNA(Lys) + AMP + diphosphate. This Acinetobacter baumannii (strain AB307-0294) protein is Lysine--tRNA ligase.